The sequence spans 784 residues: ATP-dependent 6-phosphofructokinase, platelet type (784 aa).

An N-acetylmethionine modification is found at Met1. The N-terminal catalytic PFK domain 1 stretch occupies residues 1 to 398 (MSDLDSSSSS…NLNTYKRLAI (398 aa)). Phosphoserine occurs at positions 2, 6, and 20. ATP contacts are provided by residues Gly33, 96 to 97 (RC), and 126 to 129 (GDGS). Residue Asp127 coordinates Mg(2+). Ser141 is modified (phosphoserine). Residues 172–174 (SID), Arg209, 216–218 (MGR), Glu272, Arg300, and 306–309 (HVQR) each bind substrate. Catalysis depends on Asp174, which acts as the Proton acceptor. Lys394 is subject to N6-acetyllysine. Positions 399–410 (KLPDEKIVKSNC) are interdomain linker. The C-terminal regulatory PFK domain 2 stretch occupies residues 411–784 (NVAVINVGAP…LESLQHHEEL (374 aa)). Beta-D-fructose 2,6-bisphosphate is bound at residue Arg480. Lys485 bears the N6-acetyllysine mark. Beta-D-fructose 2,6-bisphosphate contacts are provided by residues 537 to 541 (TVSNN), Arg575, 582 to 584 (MGG), and Glu638. A glycan (O-linked (GlcNAc) serine) is linked at Ser539. Tyr650 carries the phosphotyrosine modification. Beta-D-fructose 2,6-bisphosphate contacts are provided by residues Arg664 and 670 to 673 (HMQQ). Lys687 is subject to N6-acetyllysine. Beta-D-fructose 2,6-bisphosphate is bound at residue Arg743.

This sequence belongs to the phosphofructokinase type A (PFKA) family. ATP-dependent PFK group I subfamily. Eukaryotic two domain clade 'E' sub-subfamily. As to quaternary structure, homo- and heterotetramers. Phosphofructokinase (PFK) enzyme functions as a tetramer composed of different combinations of 3 types of subunits, called PFKM (M), PFKL (L) and PFKP (P). The composition of the PFK tetramer differs according to the tissue type it is present in. The kinetic and regulatory properties of the tetrameric enzyme are dependent on the subunit composition, hence can vary across tissues. Interacts with ATG4B; promoting phosphorylation of ATG4B. Requires Mg(2+) as cofactor. In terms of processing, glcNAcylation decreases enzyme activity. As to expression, expression is constant during tumor growth and markedly decreases when cell proliferation stops.

Its subcellular location is the cytoplasm. It catalyses the reaction beta-D-fructose 6-phosphate + ATP = beta-D-fructose 1,6-bisphosphate + ADP + H(+). It functions in the pathway carbohydrate degradation; glycolysis; D-glyceraldehyde 3-phosphate and glycerone phosphate from D-glucose: step 3/4. With respect to regulation, allosterically activated by ADP, AMP, or fructose 2,6-bisphosphate, and allosterically inhibited by ATP or citrate. Catalyzes the phosphorylation of D-fructose 6-phosphate to fructose 1,6-bisphosphate by ATP, the first committing step of glycolysis. This is ATP-dependent 6-phosphofructokinase, platelet type (Pfkp) from Mus musculus (Mouse).